The following is a 98-amino-acid chain: Citrate lyase acyl carrier protein 1 (98 aa).

Ser-14 carries the O-(phosphoribosyl dephospho-coenzyme A)serine modification.

This sequence belongs to the CitD family. As to quaternary structure, oligomer with a subunit composition of (alpha,beta,gamma)6.

The protein resides in the cytoplasm. Its function is as follows. Covalent carrier of the coenzyme of citrate lyase. The polypeptide is Citrate lyase acyl carrier protein 1 (Salmonella paratyphi A (strain ATCC 9150 / SARB42)).